The following is a 464-amino-acid chain: Gasdermin-A3 (464 aa).

Positions 1 to 261 (MPVFEDVTRA…EEPEEEKLIG (261 aa)) are triggers pyroptosis. A cardiolipin is bound at residue 9-13 (RALVR). The next 4 beta stranded transmembrane spans lie at 78–95 (NFSF…LVEV), 99–120 (VKVK…TLSV), 164–180 (VTVE…SLPS), and 184–198 (LGLQ…AVTI). Residues 255–327 (EEEKLIGEMH…DKGQKVTLEA (73 aa)) are a coiled coil.

Belongs to the gasdermin family. Homooligomer; homooligomeric ring-shaped pore complex containing 18-36 subunits when inserted in the membrane. Post-translationally, cleavage relieves autoinhibition by releasing the N-terminal moiety (Gasdermin-A3, N-terminal) that initiates pyroptosis. In contrast to Gsdma, not cleaved by bacterial effector protein SpeB. In terms of processing, palmitoylated. As to expression, highest levels in skin with weak expression in placenta and testis. Not detected in the gastrointestinal tract. In skin, expressed in postnatal hair follicles and epidermis as well as sebaceous gland basal cells.

Its subcellular location is the cytoplasm. The protein localises to the cytosol. It localises to the cell membrane. The protein resides in the mitochondrion membrane. With respect to regulation, the full-length protein before cleavage is inactive: intramolecular interactions between N- and C-terminal domains mediate autoinhibition in the absence of activation signal. The intrinsic pyroptosis-inducing activity is carried by the released N-terminal moiety (Gasdermin-A3, N-terminal). Its function is as follows. Precursor of a pore-forming protein involved in the transition from catagen to telogen at the end of hair follicle morphogenesis. This form constitutes the precursor of the pore: upon cleavage, the released N-terminal moiety (Gasdermin-A3, N-terminal) binds to membranes and forms pores, triggering pyroptosis. This form acts as a sensor of infection: activation is triggered by cleavage by some bacterial effector protein, which releases the N-terminal moiety (Gasdermin-A3, N-terminal). Functionally, pore-forming protein that causes membrane permeabilization and pyroptosis. Released upon cleavage by some bacterial effector protein, and binds to membrane inner leaflet lipids. Homooligomerizes within the membrane and forms pores of 10-15 nanometers (nm) of inner diameter, allowing the release of mature interleukin-1 (IL1B and IL18) and triggering pyroptosis. Binds to membrane inner leaflet lipids, including bisphosphorylated phosphatidylinositols, such as phosphatidylinositol (4,5)-bisphosphate, as well as phosphatidylinositol (3,4,5)-bisphosphate, and more weakly to monophosphorylated phosphatidylinositols. Also binds to bacterial and mitochondrial lipids, including cardiolipin, and exhibits bactericidal activity. Plays a role in the transition from catagen to telogen at the end of hair follicle morphogenesis, possibly by regulating hair follicle stem cell niche maintenance. Also required for mammary gland development. The sequence is that of Gasdermin-A3 from Mus musculus (Mouse).